The following is an 821-amino-acid chain: Glycogen phosphorylase (821 aa).

Lys667 carries the post-translational modification N6-(pyridoxal phosphate)lysine.

The protein belongs to the glycogen phosphorylase family. Pyridoxal 5'-phosphate is required as a cofactor.

The enzyme catalyses [(1-&gt;4)-alpha-D-glucosyl](n) + phosphate = [(1-&gt;4)-alpha-D-glucosyl](n-1) + alpha-D-glucose 1-phosphate. In terms of biological role, phosphorylase is an important allosteric enzyme in carbohydrate metabolism. Enzymes from different sources differ in their regulatory mechanisms and in their natural substrates. However, all known phosphorylases share catalytic and structural properties. This chain is Glycogen phosphorylase (glgP), found in Haemophilus influenzae (strain ATCC 51907 / DSM 11121 / KW20 / Rd).